Reading from the N-terminus, the 223-residue chain is Putative lipoprotein NMB1126/NMB1164 (223 aa).

The N-terminal stretch at 1 to 19 is a signal peptide; the sequence is MKTVSTAVVLAAAAVSLTG. A lipid anchor (N-palmitoyl cysteine) is attached at C20. Residue C20 is the site of S-diacylglycerol cysteine attachment.

It is found in the cell membrane. In Neisseria meningitidis serogroup B (strain ATCC BAA-335 / MC58), this protein is Putative lipoprotein NMB1126/NMB1164.